The chain runs to 446 residues: Methanogenesis regulatory protein FilR1 (446 aa).

A Response regulatory domain is found at 297–416 (DVMIVEDDLG…QRLPEIAEEA (120 aa)). Asp350 carries the 4-aspartylphosphate modification.

In terms of processing, phosphorylated by FilI.

Its function is as follows. Member of the two-component regulatory system FilI/FilRs, which is involved in the regulation of methanogenesis. Regulates its own expression, expression of the filI-filR2 operon, and of genes involved in methanogenesis such as acs1, acs4 and mtrABC. Acts by binding to the promoters. This is Methanogenesis regulatory protein FilR1 from Methanothrix harundinacea (strain 6Ac) (Methanosaeta harundinacea).